We begin with the raw amino-acid sequence, 305 residues long: Probable G-protein coupled receptor 141 (305 aa).

Topologically, residues 1-22 (MPGHNTSRNSSCDPIVTPHLIS) are extracellular. Asn5 and Asn9 each carry an N-linked (GlcNAc...) asparagine glycan. Residues 23 to 43 (LYFIVLIGGLVGVISILFLLV) traverse the membrane as a helical segment. Topologically, residues 44 to 50 (KMNTRSV) are cytoplasmic. A helical membrane pass occupies residues 51–71 (TTMAVINLVVVHSVFLLTVPF). The Extracellular segment spans residues 72–89 (RLTYLIKKTWMFGLPFCK). A helical transmembrane segment spans residues 90–110 (FVSAMLHIHMYLTFLFYVVIL). Over 111–131 (VTRYLIFFKCKDKVEFYRKLH) the chain is Cytoplasmic. The chain crosses the membrane as a helical span at residues 132 to 152 (AVAASAGMWTLVIVIVVPLVV). The Extracellular segment spans residues 153 to 183 (SRYGIHEEYNEEHCFKFHKELAYTYVKIINY). The helical transmembrane segment at 184–204 (MIVIFVIAVAVILLVFQVFII) threads the bilayer. Residues 205 to 227 (MLMVQKLRHSLLSHQEFWAQLKN) are Cytoplasmic-facing. A helical transmembrane segment spans residues 228–248 (LFFIGVILVCFLPYQFFRIYY). The Extracellular segment spans residues 249-267 (LNVVTHSNACNSKVAFYNE). The chain crosses the membrane as a helical span at residues 268–288 (IFLSVTAISCYDLLLFVFGGS). Residues 289 to 305 (HWFKQKIIGLWNCVLCR) are Cytoplasmic-facing.

Belongs to the G-protein coupled receptor 1 family.

The protein resides in the cell membrane. Orphan receptor. The protein is Probable G-protein coupled receptor 141 (GPR141) of Homo sapiens (Human).